The sequence spans 250 residues: Testis-expressed protein 101 (250 aa).

The N-terminal stretch at 1–25 (MGACRIQYILLVFLLIASHWTLVQN) is a signal peptide. Residues Asn-45, Asn-110, Asn-134, and Asn-160 are each glycosylated (N-linked (GlcNAc...) asparagine). Residues 141-215 (CPTCLALEPC…VKETCSYQSF (75 aa)) enclose the UPAR/Ly6 domain. The GPI-anchor amidated glycine moiety is linked to residue Gly-224. The propeptide at 225–250 (ASWMPTSLWVLELLLPALSLPLIYFP) is removed in mature form.

Interacts with VAMP3. Interacts with LY6K. Interacts with DPEP3; co-localized on the cell surface of spermatocytes, spermatids, and testicular spermatozoa, co-localized only in cytoplasmic droplets of caput and corpus epididymal sperm. Interacts with ADAM5. N-glycosylated; by high mannose and/or biantennary complex and/or certain types of hybrid oligosaccharides; possesses different oligosaccharides chains according to its subcellular localization in the testis. Post-translationally, sheds from membrane raft by ACE and released from the cell surface of epididymal sperm while it passes through the caput epididymis leading to disappearance of TEX101 on spermatozoa; is essential to produce fertile spermatozoa. Detected in testis.

The protein localises to the cell membrane. It localises to the membrane raft. The protein resides in the cytoplasmic vesicle. It is found in the secretory vesicle. Its subcellular location is the acrosome. The protein localises to the secreted. In terms of biological role, plays a role in fertilization by controlling binding of sperm to zona pellucida and migration of spermatozoa into the oviduct. May play a role in signal transduction and promote protein tyrosine phosphorylation. This chain is Testis-expressed protein 101, found in Rattus norvegicus (Rat).